The following is a 25-amino-acid chain: ADDDLEGFSEEDLKAIKEHRAGLAA.

Belongs to the non-disulfide-bridged peptide (NDBP) superfamily. Expressed by the venom gland.

It localises to the secreted. Its function is as follows. Unknown. Is not toxic to mammals. This is Toxin Tpa3 from Tityus pachyurus (Colombian scorpion).